We begin with the raw amino-acid sequence, 823 residues long: Protein Jade-3 (823 aa).

Positions 1-40 are disordered; sequence MKRHRPVSSSESSDECPSTSFTSSSMYRKKSKNPKEQKKS. Low complexity predominate over residues 8–20; the sequence is SSSESSDECPSTS. 3 positions are modified to N6-acetyllysine: K30, K32, and K35. Residues 200–250 form a PHD-type 1 zinc finger; that stretch reads DVICDVCRSPDSEEGNDMVFCDKCNVCVHQACYGILKIPEGSWLCRSCVLG. The C2HC pre-PHD-type zinc-finger motif lies at 252–286; it reads YPQCVLCPKKGGAMKTTRTGTKWAHVSCALWIPEV. The PHD-type 2 zinc finger occupies 310-366; the sequence is LVCNLCKLKTGACIQCSVKSCITAFHVTCAFEHGLEMKTILDEGDEVKFKSFCLKHS. 2 disordered regions span residues 543–585 and 601–631; these read LKMP…PEEP and KSNC…AEFY. Positions 549 to 562 are enriched in basic and acidic residues; the sequence is TSEDCKDSSTETEH. Phosphoserine occurs at positions 566 and 578. Position 601 is an N6-acetyllysine (K601). S608 bears the Phosphoserine mark. Residue K638 is modified to N6-acetyllysine. Residues 651–676 form a disordered region; that stretch reads SIGNGKNQPNSRVSSSNGLEGNWSGN. K735 carries the post-translational modification N6-acetyllysine. The tract at residues 756 to 823 is disordered; that stretch reads TGRASYQETD…HPHSHSSMQR (68 aa). A phosphoserine mark is found at S774 and S776. The segment covering 781-809 has biased composition (basic and acidic residues); the sequence is EGSKETPRVKRESSDRENPSHDSARECHG.

The protein belongs to the JADE family. In terms of assembly, component of the HBO1 complex composed at least of ING4 or ING5, MYST2/HBO1, MEAF6, and one of JADE1, JADE2 and JADE3.

In terms of biological role, scaffold subunit of some HBO1 complexes, which have a histone H4 acetyltransferase activity. This Mus musculus (Mouse) protein is Protein Jade-3 (Jade3).